The sequence spans 153 residues: Ubiquitin/ISG15-conjugating enzyme E2 L6 (153 aa).

Residues 2–149 enclose the UBC core domain; that stretch reads MASKRVAKEL…AEEFTLKFGV (148 aa). The active-site Glycyl thioester intermediate is C86.

Belongs to the ubiquitin-conjugating enzyme family. As to quaternary structure, interacts with RNF19A, RNF19B and RNF144B. Interacts with FLT3 (tyrosine phosphorylated). ISGylated.

It catalyses the reaction S-ubiquitinyl-[E1 ubiquitin-activating enzyme]-L-cysteine + [E2 ubiquitin-conjugating enzyme]-L-cysteine = [E1 ubiquitin-activating enzyme]-L-cysteine + S-ubiquitinyl-[E2 ubiquitin-conjugating enzyme]-L-cysteine.. It functions in the pathway protein modification; protein ubiquitination. In terms of biological role, catalyzes the covalent attachment of ubiquitin or ISG15 to other proteins. Functions in the E6/E6-AP-induced ubiquitination of p53/TP53. Promotes ubiquitination and subsequent proteasomal degradation of FLT3. The protein is Ubiquitin/ISG15-conjugating enzyme E2 L6 (Ube2l6) of Mus musculus (Mouse).